Here is a 232-residue protein sequence, read N- to C-terminus: Glutathione S-transferase E14 (232 aa).

The region spanning 4 to 85 is the GST N-terminal domain; it reads PKPILYYDER…HLAEKFDEGG (82 aa). Positions 91-218 constitute a GST C-terminal domain; the sequence is EHAERMKVLN…RQTMESVGSF (128 aa).

Belongs to the GST superfamily. Epsilon family. As to expression, expressed in the adult ovary (at protein level).

It catalyses the reaction RX + glutathione = an S-substituted glutathione + a halide anion + H(+). Its function is as follows. Conjugation of reduced glutathione to a wide number of exogenous and endogenous hydrophobic electrophiles. Essential for ecdysteroid biosynthesis. May be involved in detoxification. The chain is Glutathione S-transferase E14 from Drosophila melanogaster (Fruit fly).